We begin with the raw amino-acid sequence, 419 residues long: GTPase Obg (419 aa).

An Obg domain is found at 1 to 158 (MIFIDTAEII…RRLRLELKLV (158 aa)). The OBG-type G domain occupies 159-328 (AHVGLVGLPN…LVDVLFELIS (170 aa)). Residues 165–172 (GLPNAGKS), 190–194 (FTTRS), 211–214 (DVPG), 281–284 (NKID), and 309–311 (SAA) contribute to the GTP site. 2 residues coordinate Mg(2+): Ser-172 and Thr-192. In terms of domain architecture, OCT spans 344-419 (ELPPLPEDFS…VIHDKAFEIL (76 aa)).

It belongs to the TRAFAC class OBG-HflX-like GTPase superfamily. OBG GTPase family. In terms of assembly, monomer. Requires Mg(2+) as cofactor.

It localises to the cytoplasm. In terms of biological role, an essential GTPase which binds GTP, GDP and possibly (p)ppGpp with moderate affinity, with high nucleotide exchange rates and a fairly low GTP hydrolysis rate. Plays a role in control of the cell cycle, stress response, ribosome biogenesis and in those bacteria that undergo differentiation, in morphogenesis control. This Coprothermobacter proteolyticus (strain ATCC 35245 / DSM 5265 / OCM 4 / BT) protein is GTPase Obg.